The following is a 763-amino-acid chain: Sphingoid long-chain bases kinase 1 (763 aa).

A disordered region spans residues 34–81 (TGGSQQSSPIVFPEKRNKKVKASSRRGEVTNDPQVKPKPDEHRIDIGG). The span at 58–81 (RRGEVTNDPQVKPKPDEHRIDIGG) shows a compositional bias: basic and acidic residues. One can recognise a DAGKc domain in the interval 245–384 (KSAPKMLVIL…TDVFAVEWIH (140 aa)). ATP is bound by residues 255 to 257 (NPR) and threonine 287. Residue 313-316 (GGDG) coordinates substrate. The Proton donor/acceptor role is filled by aspartate 315. Residues glutamate 320, 345 to 347 (GSD), and arginine 418 contribute to the ATP site. The segment at 561–603 (MGLTSVQDPPTRCSWGNTGGQDREDISSTVSDPGPIWDAGPKW) is disordered. 733-735 (DGE) provides a ligand contact to ATP.

Expressed in roots, stems, leaves and at higher levels in flowers.

Involved in the production of sphingolipid metabolites. Active on sphingosine, phytosphingosine (PHS, 4-hydroxysphinganine), D-erythro-dihydrosphingosine, D-erythro-sphingosine and trans-4, trans-8-sphingadienine, an LCB found exclusively in plants, but not on N-acetyl-dihydrosphingosine (C2-dihydroceramide) and D-threo-dihydrosphingosine. The polypeptide is Sphingoid long-chain bases kinase 1 (LCBK1) (Arabidopsis thaliana (Mouse-ear cress)).